We begin with the raw amino-acid sequence, 321 residues long: Ras association domain-containing protein 4 (321 aa).

The segment at 79–159 is disordered; sequence HLPSTSWMPR…RPKCRAPGEA (81 aa). The span at 98-110 shows a compositional bias: polar residues; it reads SPQNGNITAQGPS. S141 is subject to Phosphoserine. The region spanning 174 to 262 is the Ras-associating domain; it reads YNHKTSVFTP…ARIFLMEADL (89 aa). The 48-residue stretch at 270 to 317 folds into the SARAH domain; it reads VAQYIKFEMPVLDSFVEKLKEEEEREIIKLTMKFQALRLTMLQRLEQL.

In terms of assembly, interacts directly with activated KRAS in a GTP-dependent manner. As to expression, widely expressed. Frequently down-regulated in tumor cell lines.

In terms of biological role, potential tumor suppressor. May act as a KRAS effector protein. May promote apoptosis and cell cycle arrest. The protein is Ras association domain-containing protein 4 (RASSF4) of Homo sapiens (Human).